The primary structure comprises 199 residues: TATA-box-binding protein (199 aa).

2 tandem repeats follow at residues 10-86 (IENI…VKLL) and 101-177 (IQNI…YNQL).

This sequence belongs to the TBP family.

General factor that plays a role in the activation of archaeal genes transcribed by RNA polymerase. Binds specifically to the TATA box promoter element which lies close to the position of transcription initiation. The polypeptide is TATA-box-binding protein (Pyrobaculum aerophilum (strain ATCC 51768 / DSM 7523 / JCM 9630 / CIP 104966 / NBRC 100827 / IM2)).